The sequence spans 303 residues: Cobalamin biosynthesis protein CobD (303 aa).

Helical transmembrane passes span 65–85, 147–167, 235–255, and 283–303; these read LLAWLLSLLPGIGWLAEIVLL, DAVFAALFWFIVAGAPGVVLY, AGPVMAAGAGALGVVLGGAAI, and LVWAGVGVWLLVLLFGGWLYA.

It belongs to the CobD/CbiB family.

It localises to the cell membrane. It functions in the pathway cofactor biosynthesis; adenosylcobalamin biosynthesis. Its function is as follows. Converts cobyric acid to cobinamide by the addition of aminopropanol on the F carboxylic group. This Stutzerimonas stutzeri (strain A1501) (Pseudomonas stutzeri) protein is Cobalamin biosynthesis protein CobD.